A 312-amino-acid chain; its full sequence is Nucleosome assembly protein 1-like 4 (312 aa).

Positions 24 to 78 form a coiled coil; it reads VETLKNKLQALAEQHVDVLESLAPSVRKRVDVLMEIQSQHDELEVKFFEEKAALE. The Nuclear export signal motif lies at 45-60; it reads LAPSVRKRVDVLMEIQ. Positions 288 to 312 are disordered; that stretch reads EDYGASWVDDEEEDDNDDEYSDEEA.

Belongs to the nucleosome assembly protein (NAP) family.

The protein resides in the nucleus. It localises to the cytoplasm. Functionally, may modulate chromatin structure by regulation of nucleosome assembly/disassembly. The sequence is that of Nucleosome assembly protein 1-like 4 from Oryza sativa subsp. indica (Rice).